A 441-amino-acid chain; its full sequence is Protein eva-1 homolog C (441 aa).

Residues 1–23 (MLLPGRARQPPTPQPVQHPGLRR) are disordered. Positions 1–48 (MLLPGRARQPPTPQPVQHPGLRRQVEPPGQLLRLFYCTVLVCSKEISA) are cleaved as a signal peptide. Residues 49 to 322 (LTDFSGYLTK…AYIRAHPERA (274 aa)) are Extracellular-facing. An N-linked (GlcNAc...) asparagine glycan is attached at asparagine 62. The 93-residue stretch at 67 to 159 (ACDGDYLNLQ…KYLLVSFKCQ (93 aa)) folds into the SUEL-type lectin 1 domain. A glycan (N-linked (GlcNAc...) asparagine) is linked at asparagine 165. Residues 168–260 (VCEDQELKLH…KYLTVTYACV (93 aa)) form the SUEL-type lectin 2 domain. A helical membrane pass occupies residues 323–343 (ALLFVSSVCIGLALTLCALVI). The Cytoplasmic portion of the chain corresponds to 344-441 (RESCAKDFRD…SLPRNMGQFY (98 aa)). Residues 362 to 390 (VPGSDKVEEDSEDEEEEEDPSESDFPGEL) form a disordered region. Acidic residues predominate over residues 368 to 383 (VEEDSEDEEEEEDPSE).

It belongs to the EVA1 family. As to expression, ubiquitous.

The protein resides in the membrane. Functionally, binds heparin. The chain is Protein eva-1 homolog C (EVA1C) from Homo sapiens (Human).